We begin with the raw amino-acid sequence, 117 residues long: uncharacterized protein (117 aa).

This is an uncharacterized protein from Schizosaccharomyces pombe (strain 972 / ATCC 24843) (Fission yeast).